Here is a 158-residue protein sequence, read N- to C-terminus: Endoribonuclease YbeY (158 aa).

The Zn(2+) site is built by H121, H125, and H131.

Belongs to the endoribonuclease YbeY family. The cofactor is Zn(2+).

It is found in the cytoplasm. Functionally, single strand-specific metallo-endoribonuclease involved in late-stage 70S ribosome quality control and in maturation of the 3' terminus of the 16S rRNA. This Exiguobacterium sibiricum (strain DSM 17290 / CCUG 55495 / CIP 109462 / JCM 13490 / 255-15) protein is Endoribonuclease YbeY.